Reading from the N-terminus, the 182-residue chain is Large ribosomal subunit protein uL10 (182 aa).

It belongs to the universal ribosomal protein uL10 family. In terms of assembly, part of the ribosomal stalk of the 50S ribosomal subunit. The N-terminus interacts with L11 and the large rRNA to form the base of the stalk. The C-terminus forms an elongated spine to which L12 dimers bind in a sequential fashion forming a multimeric L10(L12)X complex.

In terms of biological role, forms part of the ribosomal stalk, playing a central role in the interaction of the ribosome with GTP-bound translation factors. This Microcystis aeruginosa (strain NIES-843 / IAM M-2473) protein is Large ribosomal subunit protein uL10.